The sequence spans 392 residues: Keratin, type I cuticular Ha4 (392 aa).

Residues 1 to 56 (MSCESCLPALSCRTSCSSRPCVPPSCHGCTLPGACNIPANVGNCNWFCEGSFNGNE) are head. Residues 56–367 (EKETMQFLND…SLLESEDCNL (312 aa)) enclose the IF rod domain. Positions 57-91 (KETMQFLNDRLASYMEKVRQLERENAELECRIQER) are coil 1A. The linker 1 stretch occupies residues 92-102 (NQQQDPLVCPA). Positions 103 to 203 (YQAYFRTIEE…HEEEVNTLRC (101 aa)) are coil 1B. The linker 12 stretch occupies residues 204-219 (QLGDRLNVEVDAAPTV). Positions 220–363 (DLNRVLNETR…NTYRSLLESE (144 aa)) are coil 2. The interval 364 to 392 (DCNLPCNPCATTNASGSCCGPCGSSKRCC) is tail.

Belongs to the intermediate filament family. As to expression, expressed in the hair root in the hair shaft cuticle and cortex.

In Mus musculus (Mouse), this protein is Keratin, type I cuticular Ha4.